Consider the following 190-residue polypeptide: Outer-membrane lipoprotein LolB (190 aa).

A signal peptide spans 1–16 (MRLRFSLLLTVSLLAG). C17 carries the N-palmitoyl cysteine lipid modification. A lipid anchor (S-diacylglycerol cysteine) is attached at C17.

This sequence belongs to the LolB family. In terms of assembly, monomer.

Its subcellular location is the cell outer membrane. Its function is as follows. Plays a critical role in the incorporation of lipoproteins in the outer membrane after they are released by the LolA protein. The polypeptide is Outer-membrane lipoprotein LolB (Dechloromonas aromatica (strain RCB)).